The sequence spans 81 residues: ATP synthase subunit c, chloroplastic (81 aa).

The next 2 membrane-spanning stretches (helical) occupy residues 3 to 23 (PIIS…ASIG) and 57 to 77 (LAFM…LLFA).

The protein belongs to the ATPase C chain family. F-type ATPases have 2 components, F(1) - the catalytic core - and F(0) - the membrane proton channel. F(1) has five subunits: alpha(3), beta(3), gamma(1), delta(1), epsilon(1). F(0) has four main subunits: a(1), b(1), b'(1) and c(10-14). The alpha and beta chains form an alternating ring which encloses part of the gamma chain. F(1) is attached to F(0) by a central stalk formed by the gamma and epsilon chains, while a peripheral stalk is formed by the delta, b and b' chains.

The protein resides in the plastid. It is found in the chloroplast thylakoid membrane. In terms of biological role, f(1)F(0) ATP synthase produces ATP from ADP in the presence of a proton or sodium gradient. F-type ATPases consist of two structural domains, F(1) containing the extramembraneous catalytic core and F(0) containing the membrane proton channel, linked together by a central stalk and a peripheral stalk. During catalysis, ATP synthesis in the catalytic domain of F(1) is coupled via a rotary mechanism of the central stalk subunits to proton translocation. Functionally, key component of the F(0) channel; it plays a direct role in translocation across the membrane. A homomeric c-ring of between 10-14 subunits forms the central stalk rotor element with the F(1) delta and epsilon subunits. This chain is ATP synthase subunit c, chloroplastic, found in Welwitschia mirabilis (Tree tumbo).